Consider the following 340-residue polypeptide: Glycerol-3-phosphate dehydrogenase [NAD(P)+] (340 aa).

NADPH contacts are provided by S23, W24, R43, K44, and K113. K113, G141, and T143 together coordinate sn-glycerol 3-phosphate. A145 contacts NADPH. Sn-glycerol 3-phosphate is bound by residues K196, D249, S259, R260, and N261. The Proton acceptor role is filled by K196. Position 260 (R260) interacts with NADPH. E286 lines the NADPH pocket.

Belongs to the NAD-dependent glycerol-3-phosphate dehydrogenase family.

The protein resides in the cytoplasm. It catalyses the reaction sn-glycerol 3-phosphate + NAD(+) = dihydroxyacetone phosphate + NADH + H(+). It carries out the reaction sn-glycerol 3-phosphate + NADP(+) = dihydroxyacetone phosphate + NADPH + H(+). The protein operates within membrane lipid metabolism; glycerophospholipid metabolism. In terms of biological role, catalyzes the reduction of the glycolytic intermediate dihydroxyacetone phosphate (DHAP) to sn-glycerol 3-phosphate (G3P), the key precursor for phospholipid synthesis. The protein is Glycerol-3-phosphate dehydrogenase [NAD(P)+] of Zymomonas mobilis subsp. mobilis (strain ATCC 31821 / ZM4 / CP4).